Reading from the N-terminus, the 282-residue chain is HTH-type transcriptional activator RhaR (282 aa).

Residues 179–277 enclose the HTH araC/xylS-type domain; sequence DKLITALANS…GMTPSQWRHL (99 aa). 2 consecutive DNA-binding regions (H-T-H motif) follow at residues 196–217 and 244–267; these read DAFCQQEQCSERVLRQQFRAQT and VSEISMQCGFEDSNYFSVVFTRET.

As to quaternary structure, binds DNA as a dimer.

It is found in the cytoplasm. In terms of biological role, activates expression of the rhaSR operon in response to L-rhamnose. The protein is HTH-type transcriptional activator RhaR of Salmonella choleraesuis (strain SC-B67).